A 270-amino-acid polypeptide reads, in one-letter code: MEHGSIITQARREDALVLTKQGLVSKSSPKKPRGRSIFKALLCCFHTQHVVQSSSSTELTHKEEANTIAKSDLLQCLQYQFYQIPGTCLLPEVTEQDQGRICVVIDLDETLVHSSFKPINNADFIVPVEIEGTTHQVYVLKRPYVDEFLRRMGELFECVLFTASLAKYADPVTDLLDRCGVFRARLFREACVFHQGCYVKDLSRLGRDLRKTVILDNSPASYIFHPENAVPVQSWFDDMADTELLNLIPVFEELSGTDDVYTSLGQLRAP.

Serine 5 bears the Phosphoserine mark. One can recognise an FCP1 homology domain in the interval 96–254; it reads QDQGRICVVI…LNLIPVFEEL (159 aa). Aspartate 106 functions as the 4-aspartylphosphate intermediate in the catalytic mechanism. The Mg(2+) site is built by aspartate 106, aspartate 108, and asparagine 217. The active-site Proton donor is aspartate 108.

As to quaternary structure, monomer. Interacts with REST. Requires Mg(2+) as cofactor. As to expression, expression is restricted to non-neuronal tissues.

It localises to the nucleus. It catalyses the reaction O-phospho-L-seryl-[protein] + H2O = L-seryl-[protein] + phosphate. It carries out the reaction O-phospho-L-threonyl-[protein] + H2O = L-threonyl-[protein] + phosphate. Functionally, preferentially catalyzes the dephosphorylation of 'Ser-5' within the tandem 7 residue repeats in the C-terminal domain (CTD) of the largest RNA polymerase II subunit POLR2A. Negatively regulates RNA polymerase II transcription, possibly by controlling the transition from initiation/capping to processive transcript elongation. Recruited by REST to neuronal genes that contain RE-1 elements, leading to neuronal gene silencing in non-neuronal cells. This chain is Carboxy-terminal domain RNA polymerase II polypeptide A small phosphatase 2 (Ctdsp2), found in Mus musculus (Mouse).